Reading from the N-terminus, the 512-residue chain is Cytochrome P450 77A4 (512 aa).

The chain crosses the membrane as a helical span at residues 9–29; the sequence is PTSLDFTFFAIIISGFVFIIT. Cys-456 is a heme binding site.

It belongs to the cytochrome P450 family. Requires heme as cofactor.

The protein localises to the membrane. In terms of biological role, catalyzes the epoxidation of physiological unsaturated fatty acids in vitro. Can use laurate, oleate, linoleate, linolenate and vernolate as substrate. This is Cytochrome P450 77A4 (CYP77A4) from Arabidopsis thaliana (Mouse-ear cress).